Consider the following 75-residue polypeptide: Caerin-1.1 (75 aa).

A signal peptide spans 1–22 (MASLKKSLFLVLLLGFVSVSIC). Residues 23–49 (EEEKRQEDEDEHEEEGESQEEGSEEKR) constitute a propeptide that is removed on maturation. The tract at residues 24 to 49 (EEKRQEDEDEHEEEGESQEEGSEEKR) is disordered. Positions 30 to 45 (DEDEHEEEGESQEEGS) are enriched in acidic residues. At Leu74 the chain carries Leucine amide.

Belongs to the frog skin active peptide (FSAP) family. Caerin subfamily. The major product is Caerin-1.1; in addition, different peptides are produced that are missing some amino acid residues at the N-terminus or C-terminus. Caerin-1.1.1 and Caerin-1.1.4 are inactive. Expressed by the skin parotoid and/or rostral glands.

It localises to the secreted. Antimicrobial peptide with antibacterial and antiviral activities. Adopts an alpha helical conformation which can disrupt bacterial membranes. Inhibits the formation of NO by neuronal nitric oxide synthase (nNOS) at micromolar concentrations. Acts by a non-competitive mechanism, probably by binding to calcium/calmodulin and as a consequence blocking calmodulin attachment to nNOS. Its function is as follows. Is inactive. The chain is Caerin-1.1 from Ranoidea caerulea (Green tree frog).